A 985-amino-acid polypeptide reads, in one-letter code: Rho guanine nucleotide exchange factor 2 (985 aa).

The disordered stretch occupies residues 1–32 (MSRIESLTRARIDRSKEQATKTREKEKMKEAK). The segment at 39 to 86 (GHLFTTISVSGMTMCYACNKSITAKEALICPTCNVTIHNRCKDTLANC) adopts a Phorbol-ester/DAG-type zinc-finger fold. Ser109, Ser122, Ser129, Ser133, and Ser137 each carry phosphoserine. The interaction with DYNLT1 stretch occupies residues 131-161 (RQSLLGSRRGLSSLSLAKSVSTTNIAGHFND). Phosphoserine; by PAK4 is present on Ser143. Residues Ser151, Ser163, Ser172, Ser174, and Ser177 each carry the phosphoserine modification. One can recognise a DH domain in the interval 236–433 (KKQDVIYELI…KELLSNVDQD (198 aa)). Position 354 is an N6-acetyllysine (Lys354). The PH domain occupies 473 to 572 (KLIHEGCLLW…WIRVIQQSVR (100 aa)). Residues 591–619 (LRRIKTKLQQKNQALVELLQKNVELFAEM) are a coiled coil. 2 positions are modified to phosphoserine: Ser646 and Ser649. Thr680 is subject to Phosphothreonine; by MAPK1 or MAPK3. Phosphoserine occurs at positions 692, 710, and 781. A Phosphothreonine modification is found at Thr795. The stretch at 797–866 (EKQATELALL…RQLAALGQNE (70 aa)) forms a coiled coil. At Ser885 the chain carries Phosphoserine. Disordered regions lie at residues 890–909 (DALY…DRLD) and 918–985 (HRPF…ASES). Tyr893 bears the Phosphotyrosine mark. Ser895 bears the Phosphoserine; by PAK4 mark. Over residues 919–938 (RPFDDREAQELGSPEDRLQD) the composition is skewed to basic and acidic residues. Residues Ser931, Ser939, and Ser940 each carry the phosphoserine modification. Positions 940–949 (SDPDTGSEEE) are enriched in acidic residues. Thr944 is modified (phosphothreonine). Ser946, Ser951, Ser952, Ser955, and Ser959 each carry phosphoserine.

In terms of assembly, found in a complex composed at least of ARHGEF2, NOD2 and RIPK2. Interacts with RIPK2; the interaction mediates tyrosine phosphorylation of RIPK2 by Src kinase CSK. Interacts with RIPK1 and RIPK3. Interacts with YWHAZ/14-3-3 zeta; when phosphorylated at Ser-885. Interacts with the kinases PAK4, AURKA and MAPK1. Interacts with RHOA and RAC1. Interacts with NOD1. Interacts (via the N- terminal zinc finger) with CAPN6 (via domain II). Interacts with DYNLT1. In terms of processing, phosphorylation of Ser-885 by PAK1 induces binding to protein YWHAZ, promoting its relocation to microtubules and the inhibition of its activity. Phosphorylated by AURKA and CDK1 during mitosis, which negatively regulates its activity. Phosphorylation by MAPK1 or MAPK3 increases nucleotide exchange activity. Phosphorylation by PAK4 releases GEF-H1 from the microtubules. Phosphorylated on serine, threonine and tyrosine residues in a RIPK2-dependent manner. As to expression, ubiquitous, with the exception of liver tissue. Levels are high in hemopoietic tissues (thymus, spleen, bone marrow) as well as in kidney and lung. Expressed in the germinal zones of both the neocortex and the cerebellum and in the pontine gray nuclei.

The protein localises to the cytoplasm. Its subcellular location is the cytoskeleton. It localises to the cell junction. It is found in the tight junction. The protein resides in the golgi apparatus. The protein localises to the spindle. Its subcellular location is the cytoplasmic vesicle. Activates Rho-GTPases by promoting the exchange of GDP for GTP. May be involved in epithelial barrier permeability, cell motility and polarization, dendritic spine morphology, antigen presentation, leukemic cell differentiation, cell cycle regulation, innate immune response, and cancer. Binds Rac-GTPases, but does not seem to promote nucleotide exchange activity toward Rac-GTPases. May stimulate instead the cortical activity of Rac. Inactive toward CDC42, TC10, or Ras-GTPases. Forms an intracellular sensing system along with NOD1 for the detection of microbial effectors during cell invasion by pathogens. Involved in innate immune signaling transduction pathway promoting cytokine IL6/interleukin-6 and TNF-alpha secretion in macrophage upon stimulation by bacterial peptidoglycans; acts as a signaling intermediate between NOD2 receptor and RIPK2 kinase. Contributes to the tyrosine phosphorylation of RIPK2 through Src tyrosine kinase leading to NF-kappaB activation by NOD2. Overexpression activates Rho-, but not Rac-GTPases, and increases paracellular permeability. Involved in neuronal progenitor cell division and differentiation. Involved in the migration of precerebellar neurons. This Mus musculus (Mouse) protein is Rho guanine nucleotide exchange factor 2 (Arhgef2).